Here is a 234-residue protein sequence, read N- to C-terminus: Octanoyltransferase (234 aa).

One can recognise a BPL/LPL catalytic domain in the interval Asp35 to Leu221. Residues Arg74–His81, Ala150–Gly152, and Gly163–Ser165 each bind substrate. Cys181 functions as the Acyl-thioester intermediate in the catalytic mechanism.

The protein belongs to the LipB family.

Its subcellular location is the cytoplasm. The enzyme catalyses octanoyl-[ACP] + L-lysyl-[protein] = N(6)-octanoyl-L-lysyl-[protein] + holo-[ACP] + H(+). Its pathway is protein modification; protein lipoylation via endogenous pathway; protein N(6)-(lipoyl)lysine from octanoyl-[acyl-carrier-protein]: step 1/2. Its function is as follows. Catalyzes the transfer of endogenously produced octanoic acid from octanoyl-acyl-carrier-protein onto the lipoyl domains of lipoate-dependent enzymes. Lipoyl-ACP can also act as a substrate although octanoyl-ACP is likely to be the physiological substrate. The sequence is that of Octanoyltransferase from Hyphomonas neptunium (strain ATCC 15444).